The primary structure comprises 898 residues: MSNVGDKFELSRDEFRNITQCLGNEEFRKLFAEYCQELKDPENRKQYEEELKLMEAERGYDVKFIKPLPGYVIKTVVDGKTKAFVNVCHCDLVGKPSSQCSTNKRGEKGLKWSIPYAQSQPRKDYDNKNVDCVVYDVVFHYDTLHLTKSNKNFRKLVTDTALDAVEGAFHVSLDRVNLKFPKLQYKGVAKMTVIRQKLKNFETRRKDGLIDTLYRASEQSKITHDNSADKENVNKQTFKSASQLEYTTPAYKLIHRKEVEYHELTGELDAKLDAAIPKELVLVIELPLLKSANQCTLNVTSSEVHLISDSPAKYKLEVKLPYTVLEKNGSAKFNTDETTLTVLLPVARNRRTLNDVTVSSNDQSMPDEMDQKPVERVKPLKEPQLVHSNANKKIIFPKFSANKMDNIFAFTLNVRNVDPSSIELQKGTDTVSCRFTNIGNGFFPCYYIFFLRFPNANITEVQHEEWDNNIILQVVLDHGLIDCYYAGTNENDLVQYSIMEDITDKINKFGKEIEDDSLCIAVSKNAIKQERKSSHLSIEIKTKDEIESDEGIDSALEGELKTDQSMQEDENPDEINTRTVEDDTKVAKENVKKVDQETAHEGKKSKKNQRRKNKKRSLSESCCDHLKVTINNDNPKPESGNEANSFEGTGSSSEATSKQRKARSVSESCPARDNNGVESDSVDNLSALIQFNHKYKGILKRSSLQRSISECSSIDEHYYLGTSVDGSSVAESVDHTNGELSESCRKTVRFNDAIKTKLFRSNTSILGQKKKNAKKNESKRRALTRRLSEGESTDNEDKDHQTTNEAPGSVVQRDTEHDSGISLDSDAAHPIEINADTEVQNQHQNDSTKPIEINRKVEKKFIASKNNNCNVKAQFIKSKRNDSSDIEFKSDMIFDIEM.

2 disordered regions span residues Gly-558 to Asp-680 and Ile-765 to Ser-822. A compositionally biased stretch (basic and acidic residues) spans Ile-575–Gly-602. The span at Lys-603 to Arg-616 shows a compositional bias: basic residues. A compositionally biased stretch (polar residues) spans Asn-641–Thr-656.

The protein belongs to the PIH1 family. Kintoun subfamily.

The protein localises to the cytoplasm. In terms of biological role, required for cytoplasmic pre-assembly of axonemal dyneins, thereby playing a central role in motility in cilia and flagella. Involved in pre-assembly of dynein arm complexes in the cytoplasm before intraflagellar transport loads them for the ciliary compartment. This chain is Protein kintoun, found in Aedes aegypti (Yellowfever mosquito).